We begin with the raw amino-acid sequence, 784 residues long: LPS-assembly protein LptD (784 aa).

The signal sequence occupies residues 1–24 (MKKRIPTLLATMIATALYSQQGLA). 2 cysteine pairs are disulfide-bonded: cysteine 31–cysteine 724 and cysteine 173–cysteine 725.

Belongs to the LptD family. Component of the lipopolysaccharide transport and assembly complex. Interacts with LptE and LptA. May interact with LptE during assembly of LptD by the beta-barrel assembly machine (BAM). Also interacts with LptM, which promotes the efficient assembly of the LptDE translocon by the BAM complex. Contains two intramolecular disulfide bonds. At least one disulfide bond is required for activity, and protein is probably fully oxidized in vivo.

Its subcellular location is the cell outer membrane. Its function is as follows. Together with LptE, is involved in the assembly of lipopolysaccharide (LPS) at the surface of the outer membrane. Contributes to n-hexane resistance. In Escherichia coli (strain K12), this protein is LPS-assembly protein LptD.